Consider the following 997-residue polypeptide: MSSNTVAQFATELKMPANVLLEQLRAAGVDLKSVDDAVTDSDKAKLLESLRRAHGATEGKKITLTRRQTSEIRQADATGRSRTIQVEVRKKRVFVKRDPAELAAEQAAARAEEAAAEAVPAEAAPAPAEPVRAEPAVETAAKPVEPPVAEAPAEPVAAPAAEPQPEQPAQAEAQPEPTPAAQAEPEPQPEPQPEAAPAQAVAEPVEPAKNVSVTETEAEQARPEPVVHAQTELTSQTPTPVAQPSAPAESPKSVKAEPAAAPKTTAKPGEIRRAAAPAAPDRAREEARRAAEAEAAALREMLSRPRKVLRAPEPEPQAGALSGTLHKPAGKPATTAAPKKDAKPGAPGAKKTIKTAEVSSTWSDDSARKKPADNKPAVATRDGWRAGGKGGRGGRNSRNQHQDRRHEQVQQEFIAREIHVPETISVADLAHKMSVKAAEVIKQLMKLGQMVTINQVLDQETAMIVVQEFGHTAIAAKLDDPEAFLDETAAVTEAEAEPRAPVVTVMGHVDHGKTSLLDYIRRAKVASGEAGGITQHIGAYHVETGRGVVTFLDTPGHEAFTAMRARGAKATDIVILVVAADDGVMPQTREAIHHAKAGGVPLVVAVNKIDKPEANPERVKQELVAEEVVPEEYGGDVPFVPVSAKTGAGIDDLLENVLLQAEILELKAPIEAPAKGLVIEARLDKGRGPVATILVQSGTLKRGDVVLAGASFGRVRAMLDENGKQIQTAGPSIPVEIQGLTEVPAAGDELMVLSDERKAREIALFRQGKFRDVKLARQQAANLESMFDNLGEGTQTLALIVKTDVQGSQEALVSSLTKLSTDEVRVQVVHAAVGGISESDVNLAIASNAVVIGFNVRAEQSAKKLAETNGIDLRYYNIIYDAVDEVKAAMSGMLAPEKREEVIGLVEVREVYTISRIGTVAGCMVLDGVVRRDSQVRLLRNNVVQWTGHLDSLRRFKDDVKEVKSGFDCGLTLRGNNDLQLGDQLEVFEIKEIARTL.

Positions 101–406 (ELAAEQAAAR…SRNQHQDRRH (306 aa)) are disordered. Composition is skewed to low complexity over residues 116 to 185 (AEAV…QAEP) and 195 to 209 (AAPA…EPAK). Positions 231 to 242 (TELTSQTPTPVA) are enriched in polar residues. Low complexity predominate over residues 256-280 (AEPAAAPKTTAKPGEIRRAAAPAAP). Residues 281–292 (DRAREEARRAAE) show a composition bias toward basic and acidic residues. Gly residues predominate over residues 385–394 (RAGGKGGRGG). The 168-residue stretch at 498–665 (PRAPVVTVMG…NVLLQAEILE (168 aa)) folds into the tr-type G domain. Residues 507–514 (GHVDHGKT) are G1. Residue 507–514 (GHVDHGKT) participates in GTP binding. Positions 532-536 (GITQH) are G2. Residues 553–556 (DTPG) are G3. GTP is bound by residues 553 to 557 (DTPGH) and 607 to 610 (NKID). Positions 607 to 610 (NKID) are G4. The tract at residues 643 to 645 (SAK) is G5.

It belongs to the TRAFAC class translation factor GTPase superfamily. Classic translation factor GTPase family. IF-2 subfamily.

It localises to the cytoplasm. In terms of biological role, one of the essential components for the initiation of protein synthesis. Protects formylmethionyl-tRNA from spontaneous hydrolysis and promotes its binding to the 30S ribosomal subunits. Also involved in the hydrolysis of GTP during the formation of the 70S ribosomal complex. This chain is Translation initiation factor IF-2, found in Bordetella pertussis (strain Tohama I / ATCC BAA-589 / NCTC 13251).